A 236-amino-acid chain; its full sequence is UPF0257 lipoprotein YnfC (236 aa).

The N-terminal stretch at 1–16 is a signal peptide; the sequence is MKYKLLPCLLAIFLTG. Cysteine 17 carries N-palmitoyl cysteine lipidation. Cysteine 17 is lipidated: S-diacylglycerol cysteine.

The protein belongs to the UPF0257 family.

It localises to the cell membrane. The protein is UPF0257 lipoprotein YnfC of Escherichia coli O7:K1 (strain IAI39 / ExPEC).